Consider the following 484-residue polypeptide: Ribosome biogenesis protein NOP53 (484 aa).

Disordered stretches follow at residues 1 to 51 (MAAG…WRRL) and 304 to 356 (ESDG…AARK). Ala2 is subject to N-acetylalanine. Ser29 carries the phosphoserine modification. Residues 35-49 (RRRRRGPRNKKRGWR) are compositionally biased toward basic residues. Residues 148 to 437 (KEELWEKLAK…SELSGSLRTL (290 aa)) are mediates interaction with CDKN2A/isoform tumor suppressor ARF. Ser305 bears the Phosphoserine mark. Residues 336-348 (PEKRMEKKTEQQR) show a composition bias toward basic and acidic residues. Residues 348-392 (RRREKAARKLRVQQAALRAARLQHQELFRLRGIKAQVARRLAELA) form a mediates interaction with human herpesvirus 8 protein ORF16 region. Nucleolar localization signal regions lie at residues 353-401 (AARK…RRIR) and 402-484 (RLAE…EIQL).

It belongs to the NOP53 family. Homooligomer. Interacts with PTEN; regulates PTEN phosphorylation and increases its stability. Interacts with RPL11; retains RPL11 into the nucleolus. Interacts with CDKN2A/isoform tumor suppressor ARF; the interaction is direct and promotes ARF nucleoplasmic relocalization and ubiquitin-mediated proteasomal degradation. Interacts with NPM1; the interaction is direct and competitive with MYC. Interacts with NF2 (via FERM domain); the interaction is direct. Interacts with p53/TP53 (via the oligomerization region); the interaction is direct and may prevent the MDM2-mediated proteasomal degradation of p53/TP53. Interacts with RIGI; may regulate RIGI through USP15-mediated 'Lys-63'-linked deubiquitination. Interacts with UBTF. Post-translationally, ubiquitin-mediated proteasomal degradation is regulated by c-JUN. It is associated with relocalization to the nucleoplasm and decreased homooligomerization. In terms of processing, phosphorylated upon DNA damage probably by ATM and DNA-PK; may regulate NOP53 degradation.

The protein resides in the nucleus. It localises to the nucleolus. Its subcellular location is the nucleoplasm. Its function is as follows. Nucleolar protein which is involved in the integration of the 5S RNP into the ribosomal large subunit during ribosome biogenesis. In ribosome biogenesis, may also play a role in rRNA transcription. Also functions as a nucleolar sensor that regulates the activation of p53/TP53 in response to ribosome biogenesis perturbation, DNA damage and other stress conditions. DNA damage or perturbation of ribosome biogenesis disrupt the interaction between NOP53 and RPL11 allowing RPL11 transport to the nucleoplasm where it can inhibit MDM2 and allow p53/TP53 activation. It may also positively regulate the function of p53/TP53 in cell cycle arrest and apoptosis through direct interaction, preventing its MDM2-dependent ubiquitin-mediated proteasomal degradation. Originally identified as a tumor suppressor, it may also play a role in cell proliferation and apoptosis by positively regulating the stability of PTEN, thereby antagonizing the PI3K-AKT/PKB signaling pathway. May also inhibit cell proliferation and increase apoptosis through its interaction with NF2. May negatively regulate NPM1 by regulating its nucleoplasmic localization, oligomerization and ubiquitin-mediated proteasomal degradation. Thereby, may prevent NPM1 interaction with MYC and negatively regulate transcription mediated by the MYC-NPM1 complex. May also regulate cellular aerobic respiration. In the cellular response to viral infection, may play a role in the attenuation of interferon-beta through the inhibition of RIGI. The protein is Ribosome biogenesis protein NOP53 of Mus musculus (Mouse).